A 671-amino-acid polypeptide reads, in one-letter code: Pescadillo homolog (671 aa).

Coiled coils occupy residues asparagine 294–arginine 323 and glutamine 548–methionine 584. The BRCT domain maps to lysine 317–isoleucine 403. 2 disordered regions span residues lysine 552–glutamine 577 and glycine 634–glutamine 671. Positions glycine 634 to glycine 651 are enriched in basic and acidic residues.

This sequence belongs to the pescadillo family.

It is found in the nucleus. The protein resides in the nucleolus. Its subcellular location is the nucleoplasm. Required for maturation of ribosomal RNAs and formation of the large ribosomal subunit. This is Pescadillo homolog from Leishmania major.